Consider the following 279-residue polypeptide: uncharacterized protein (279 aa).

Residues 233–279 (NDHQLHDSPLCSDVSDSTSNNNYDESLNFSNDNNNSSFNDFDDDNFI) form a disordered region. The span at 246–259 (VSDSTSNNNYDESL) shows a compositional bias: polar residues. Residues 260–271 (NFSNDNNNSSFN) show a composition bias toward low complexity.

This is an uncharacterized protein from Buchnera aphidicola subsp. Baizongia pistaciae (strain Bp).